Reading from the N-terminus, the 101-residue chain is 2-amino-4-ketopentanoate thiolase alpha subunit (101 aa).

This sequence belongs to the OrtA family. As to quaternary structure, heterodimer with OrtB.

The catalysed reaction is D-alanine + acetyl-CoA = (2R)-2-amino-4-oxopentanoate + CoA. Completely inhibited by p-chloromercuribenzoate (p-ClHgBzO) and acetyl-CoA, and partially inhibited by N-ethylmaleimide. Functionally, involved in the ornithine fermentation pathway. Catalyzes the thiolytic cleavage of 2-amino-4-ketopentanoate (AKP) with coenzyme A (CoA) to form acetyl-CoA and alanine. It is strictly specific for AKP. This chain is 2-amino-4-ketopentanoate thiolase alpha subunit, found in Acetoanaerobium sticklandii (strain ATCC 12662 / DSM 519 / JCM 1433 / CCUG 9281 / NCIMB 10654 / HF) (Clostridium sticklandii).